Reading from the N-terminus, the 51-residue chain is uncharacterized protein (51 aa).

This is an uncharacterized protein from Borreliella burgdorferi (strain ATCC 35210 / DSM 4680 / CIP 102532 / B31) (Borrelia burgdorferi).